The primary structure comprises 359 residues: 3-dehydroquinate synthase (359 aa).

NAD(+)-binding positions include 72–77 (DGEHYK), 106–110 (GVIGD), 130–131 (TT), K143, and K152. The Zn(2+) site is built by E185, H248, and H265.

Belongs to the sugar phosphate cyclases superfamily. Dehydroquinate synthase family. Co(2+) serves as cofactor. Zn(2+) is required as a cofactor. Requires NAD(+) as cofactor.

Its subcellular location is the cytoplasm. The catalysed reaction is 7-phospho-2-dehydro-3-deoxy-D-arabino-heptonate = 3-dehydroquinate + phosphate. It participates in metabolic intermediate biosynthesis; chorismate biosynthesis; chorismate from D-erythrose 4-phosphate and phosphoenolpyruvate: step 2/7. Functionally, catalyzes the conversion of 3-deoxy-D-arabino-heptulosonate 7-phosphate (DAHP) to dehydroquinate (DHQ). In Thermodesulfovibrio yellowstonii (strain ATCC 51303 / DSM 11347 / YP87), this protein is 3-dehydroquinate synthase.